A 296-amino-acid chain; its full sequence is 4-hydroxybenzoate octaprenyltransferase (296 aa).

The next 8 membrane-spanning stretches (helical) occupy residues 28 to 48 (PIGI…AGKG), 52 to 72 (LKTV…GCVI), 102 to 122 (ALAL…FTNA), 146 to 166 (YYPQ…AFTA), 169 to 189 (GDLP…TVGY), 219 to 239 (VIIL…GARF), 241 to 261 (LGAC…WEFW), and 275 to 295 (FLHN…DYAV).

The protein belongs to the UbiA prenyltransferase family. Requires Mg(2+) as cofactor.

Its subcellular location is the cell inner membrane. It catalyses the reaction all-trans-octaprenyl diphosphate + 4-hydroxybenzoate = 4-hydroxy-3-(all-trans-octaprenyl)benzoate + diphosphate. It participates in cofactor biosynthesis; ubiquinone biosynthesis. Catalyzes the prenylation of para-hydroxybenzoate (PHB) with an all-trans polyprenyl group. Mediates the second step in the final reaction sequence of ubiquinone-8 (UQ-8) biosynthesis, which is the condensation of the polyisoprenoid side chain with PHB, generating the first membrane-bound Q intermediate 3-octaprenyl-4-hydroxybenzoate. The polypeptide is 4-hydroxybenzoate octaprenyltransferase (Pseudomonas savastanoi pv. phaseolicola (strain 1448A / Race 6) (Pseudomonas syringae pv. phaseolicola (strain 1448A / Race 6))).